The sequence spans 450 residues: Protein W (450 aa).

The interval Ser53–Val92 is disordered. The span at Met63–Glu76 shows a compositional bias: basic and acidic residues. Ser257 is subject to Phosphoserine; by host. Residues Ile265–Arg324 form a disordered region. Ser350 bears the Phosphoserine; by host mark. Disordered regions lie at residues Val384–Pro403 and Pro429–Asn450. The segment covering Thr438–Asn450 has biased composition (basic residues). The Nuclear localization signal signature appears at Lys439–Arg442.

In terms of assembly, interacts with host STAT1.

It is found in the host nucleus. In terms of biological role, prevent the establishment of cellular antiviral state by blocking the interferon-alpha/beta (IFN-alpha/beta). Interacts with host STAT1 protein in the nucleus, blocking it's phosphorylation by IFN-alpha/beta. Also blocks antiviral state induced by Toll-like receptor 3/TLR3 binding to dsRNA. In Cynopterus brachyotis (Lesser short-nosed fruit bat), this protein is Protein W (P/V/C).